Here is an 865-residue protein sequence, read N- to C-terminus: Alanine--tRNA ligase (865 aa).

Positions 554, 558, 656, and 660 each coordinate Zn(2+).

It belongs to the class-II aminoacyl-tRNA synthetase family. Zn(2+) serves as cofactor.

The protein resides in the cytoplasm. It carries out the reaction tRNA(Ala) + L-alanine + ATP = L-alanyl-tRNA(Ala) + AMP + diphosphate. Functionally, catalyzes the attachment of alanine to tRNA(Ala) in a two-step reaction: alanine is first activated by ATP to form Ala-AMP and then transferred to the acceptor end of tRNA(Ala). Also edits incorrectly charged Ser-tRNA(Ala) and Gly-tRNA(Ala) via its editing domain. This Francisella tularensis subsp. holarctica (strain LVS) protein is Alanine--tRNA ligase.